Consider the following 365-residue polypeptide: UDP-N-acetylglucosamine--N-acetylmuramyl-(pentapeptide) pyrophosphoryl-undecaprenol N-acetylglucosamine transferase (365 aa).

UDP-N-acetyl-alpha-D-glucosamine is bound by residues 17 to 19 (TGG), Asn-129, Arg-167, Ser-194, Ile-250, 269 to 274 (ALTVSE), and Gln-295.

It belongs to the glycosyltransferase 28 family. MurG subfamily.

Its subcellular location is the cell inner membrane. It carries out the reaction di-trans,octa-cis-undecaprenyl diphospho-N-acetyl-alpha-D-muramoyl-L-alanyl-D-glutamyl-meso-2,6-diaminopimeloyl-D-alanyl-D-alanine + UDP-N-acetyl-alpha-D-glucosamine = di-trans,octa-cis-undecaprenyl diphospho-[N-acetyl-alpha-D-glucosaminyl-(1-&gt;4)]-N-acetyl-alpha-D-muramoyl-L-alanyl-D-glutamyl-meso-2,6-diaminopimeloyl-D-alanyl-D-alanine + UDP + H(+). It participates in cell wall biogenesis; peptidoglycan biosynthesis. In terms of biological role, cell wall formation. Catalyzes the transfer of a GlcNAc subunit on undecaprenyl-pyrophosphoryl-MurNAc-pentapeptide (lipid intermediate I) to form undecaprenyl-pyrophosphoryl-MurNAc-(pentapeptide)GlcNAc (lipid intermediate II). This Shewanella piezotolerans (strain WP3 / JCM 13877) protein is UDP-N-acetylglucosamine--N-acetylmuramyl-(pentapeptide) pyrophosphoryl-undecaprenol N-acetylglucosamine transferase.